The primary structure comprises 641 residues: Chaperone protein DnaK (641 aa).

Thr-198 bears the Phosphothreonine; by autocatalysis mark. Composition is skewed to basic and acidic residues over residues Ala-514–Glu-529, Ser-540–Glu-554, and Ala-608–Asp-621. 2 disordered regions span residues Ala-514–Glu-554 and Gln-604–Ala-641. The span at Asp-622–Asp-633 shows a compositional bias: acidic residues.

The protein belongs to the heat shock protein 70 family.

Its function is as follows. Acts as a chaperone. The protein is Chaperone protein DnaK of Sinorhizobium medicae (strain WSM419) (Ensifer medicae).